We begin with the raw amino-acid sequence, 396 residues long: Elongation factor Tu (396 aa).

Positions lysine 10–valine 206 constitute a tr-type G domain. The tract at residues glycine 19–threonine 26 is G1. Glycine 19–threonine 26 serves as a coordination point for GTP. Threonine 26 provides a ligand contact to Mg(2+). The G2 stretch occupies residues glycine 60–serine 64. The interval aspartate 81 to glycine 84 is G3. Residues aspartate 81–histidine 85 and asparagine 136–aspartate 139 contribute to the GTP site. The tract at residues asparagine 136–aspartate 139 is G4. Residues serine 174 to leucine 176 are G5.

It belongs to the TRAFAC class translation factor GTPase superfamily. Classic translation factor GTPase family. EF-Tu/EF-1A subfamily. Monomer.

It localises to the cytoplasm. It catalyses the reaction GTP + H2O = GDP + phosphate + H(+). In terms of biological role, GTP hydrolase that promotes the GTP-dependent binding of aminoacyl-tRNA to the A-site of ribosomes during protein biosynthesis. The chain is Elongation factor Tu from Bdellovibrio bacteriovorus (strain ATCC 15356 / DSM 50701 / NCIMB 9529 / HD100).